The primary structure comprises 474 residues: MGRLVVVSNRIAPPDDKKSSAGGLAVGILGALKTAGGLWFGWSGEVGNEDKPLQKVTRGNITWASFNLSEQDHEEYYSQFSNAVLWPAFHYRLDLVKFQRDSWEGYTRVNALLADKLLPLIEEDDILWIHDYHLLPFASELRKRGVNNRIGFFLHIPFPTPEIFTAIPPHEELLEGLCDYDLLGFQTENDRQAFLESVAGKTRLTTHNGKSHQAWGKTFDTEVYPIGIEPDEIAADASGPLPPKLAQLKNELKNVKNIFSVERLDYSKGLPERFQAYERLLEKYPQHHGKIRYTQIAPTSRGEVQAYQDIRHQLETEAGRINGRYGQLGWTPLYYLNQHFERKVLMKVFRYAEVGLVTPLRDGMNLVAKEYVAAQDPKDPGVLVLSQFAGAANELTSALLVNPYDSDDVANALDRALKMPLTERISRHAEMMKVIRENDINHWQETFIRDLKRTTPRSVESNLQKKIATFPKLA.

A D-glucose 6-phosphate-binding site is contributed by R10. UDP-alpha-D-glucose is bound at residue 22–23 (GG). Residues Y77 and D131 each coordinate D-glucose 6-phosphate. Residues R263 and K268 each contribute to the UDP-alpha-D-glucose site. Residue R301 coordinates D-glucose 6-phosphate. UDP-alpha-D-glucose contacts are provided by residues F340 and 366–370 (LVAKE).

It belongs to the glycosyltransferase 20 family. In terms of assembly, homotetramer.

It carries out the reaction D-glucose 6-phosphate + UDP-alpha-D-glucose = alpha,alpha-trehalose 6-phosphate + UDP + H(+). It functions in the pathway glycan biosynthesis; trehalose biosynthesis. Functionally, probably involved in the osmoprotection via the biosynthesis of trehalose. Catalyzes the transfer of glucose from UDP-alpha-D-glucose (UDP-Glc) to D-glucose 6-phosphate (Glc-6-P) to form trehalose-6-phosphate. Acts with retention of the anomeric configuration of the UDP-sugar donor. The chain is Trehalose-6-phosphate synthase from Enterobacter sp. (strain 638).